A 615-amino-acid chain; its full sequence is Protein translocase subunit SecD (615 aa).

Transmembrane regions (helical) follow at residues 10 to 30 (YIML…NLYG), 452 to 472 (QGLE…IFFY), 477 to 497 (LIAT…MSLL), 504 to 524 (MPGI…NVLI), 546 to 568 (YAGA…IILY), and 585 to 605 (GVAT…NLLY).

It belongs to the SecD/SecF family. SecD subfamily. In terms of assembly, forms a complex with SecF. Part of the essential Sec protein translocation apparatus which comprises SecA, SecYEG and auxiliary proteins SecDF-YajC and YidC.

It is found in the cell inner membrane. Its function is as follows. Part of the Sec protein translocase complex. Interacts with the SecYEG preprotein conducting channel. SecDF uses the proton motive force (PMF) to complete protein translocation after the ATP-dependent function of SecA. The chain is Protein translocase subunit SecD from Salmonella choleraesuis (strain SC-B67).